A 329-amino-acid polypeptide reads, in one-letter code: Beta-ketoacyl-[acyl-carrier-protein] synthase III (329 aa).

Residues cysteine 123 and histidine 256 contribute to the active site. An ACP-binding region spans residues 257–261 (QANIR). Asparagine 286 is an active-site residue.

The protein belongs to the thiolase-like superfamily. FabH family. In terms of assembly, homodimer.

It localises to the cytoplasm. The enzyme catalyses malonyl-[ACP] + acetyl-CoA + H(+) = 3-oxobutanoyl-[ACP] + CO2 + CoA. Its pathway is lipid metabolism; fatty acid biosynthesis. In terms of biological role, catalyzes the condensation reaction of fatty acid synthesis by the addition to an acyl acceptor of two carbons from malonyl-ACP. Catalyzes the first condensation reaction which initiates fatty acid synthesis and may therefore play a role in governing the total rate of fatty acid production. Possesses both acetoacetyl-ACP synthase and acetyl transacylase activities. Its substrate specificity determines the biosynthesis of branched-chain and/or straight-chain of fatty acids. The polypeptide is Beta-ketoacyl-[acyl-carrier-protein] synthase III (Burkholderia thailandensis (strain ATCC 700388 / DSM 13276 / CCUG 48851 / CIP 106301 / E264)).